The chain runs to 113 residues: MAKGGFPGGFGGGNMNNLMKQAQKLQKQMEDMQKDLETKEFETSVGGGAVSVTVTGKKEVKSINIKPEVVDPDDVEMLEDLVLTAVNEALRKAEEETASKMGKLTGGMPGGLF.

Residues 1–14 show a composition bias toward gly residues; sequence MAKGGFPGGFGGGN. Positions 1–31 are disordered; sequence MAKGGFPGGFGGGNMNNLMKQAQKLQKQMED.

This sequence belongs to the YbaB/EbfC family. Homodimer.

The protein localises to the cytoplasm. Its subcellular location is the nucleoid. In terms of biological role, binds to DNA and alters its conformation. May be involved in regulation of gene expression, nucleoid organization and DNA protection. In Clostridium botulinum (strain Alaska E43 / Type E3), this protein is Nucleoid-associated protein CLH_3225.